We begin with the raw amino-acid sequence, 474 residues long: 6-phospho-beta-galactosidase (474 aa).

Residues Gln19, His116, Asn159, Glu160, and Asn297 each contribute to the D-galactose 6-phosphate site. The Proton donor role is filled by Glu160. The active-site Nucleophile is Glu375. D-galactose 6-phosphate contacts are provided by Ser433, Trp434, Lys440, and Tyr442.

The protein belongs to the glycosyl hydrolase 1 family.

It catalyses the reaction a 6-phospho-beta-D-galactoside + H2O = D-galactose 6-phosphate + an alcohol. Its pathway is carbohydrate metabolism; lactose degradation; D-galactose 6-phosphate and beta-D-glucose from lactose 6-phosphate: step 1/1. This chain is 6-phospho-beta-galactosidase, found in Lacticaseibacillus casei (strain BL23) (Lactobacillus casei).